Reading from the N-terminus, the 223-residue chain is Holliday junction branch migration complex subunit RuvA (223 aa).

Residues 1–64 (MIGKLTGRLD…EDLLQLFGFL (64 aa)) are domain I. Positions 65 to 143 (SPYEKEWHRL…AVMAMGGTLD (79 aa)) are domain II. The segment at 144–171 (DAMDDVVDDMPGESAAPAPAPQPRAPKR) is flexible linker. The interval 148–177 (DVVDDMPGESAAPAPAPQPRAPKRPASNAQ) is disordered. The segment at 172–223 (PASNAQAEALSALQNLGYGPSDAAQAVAQAAESASNTPELIRAALRLLAPKE) is domain III.

Belongs to the RuvA family. Homotetramer. Forms an RuvA(8)-RuvB(12)-Holliday junction (HJ) complex. HJ DNA is sandwiched between 2 RuvA tetramers; dsDNA enters through RuvA and exits via RuvB. An RuvB hexamer assembles on each DNA strand where it exits the tetramer. Each RuvB hexamer is contacted by two RuvA subunits (via domain III) on 2 adjacent RuvB subunits; this complex drives branch migration. In the full resolvosome a probable DNA-RuvA(4)-RuvB(12)-RuvC(2) complex forms which resolves the HJ.

The protein localises to the cytoplasm. Its function is as follows. The RuvA-RuvB-RuvC complex processes Holliday junction (HJ) DNA during genetic recombination and DNA repair, while the RuvA-RuvB complex plays an important role in the rescue of blocked DNA replication forks via replication fork reversal (RFR). RuvA specifically binds to HJ cruciform DNA, conferring on it an open structure. The RuvB hexamer acts as an ATP-dependent pump, pulling dsDNA into and through the RuvAB complex. HJ branch migration allows RuvC to scan DNA until it finds its consensus sequence, where it cleaves and resolves the cruciform DNA. The chain is Holliday junction branch migration complex subunit RuvA from Jannaschia sp. (strain CCS1).